Here is a 106-residue protein sequence, read N- to C-terminus: Thiosulfate sulfurtransferase GlpE (106 aa).

The Rhodanese domain occupies Glu-17–Ala-105. The Cysteine persulfide intermediate role is filled by Cys-65.

Belongs to the GlpE family.

The protein localises to the cytoplasm. The catalysed reaction is thiosulfate + hydrogen cyanide = thiocyanate + sulfite + 2 H(+). It carries out the reaction thiosulfate + [thioredoxin]-dithiol = [thioredoxin]-disulfide + hydrogen sulfide + sulfite + 2 H(+). Its function is as follows. Transferase that catalyzes the transfer of sulfur from thiosulfate to thiophilic acceptors such as cyanide or dithiols. May function in a CysM-independent thiosulfate assimilation pathway by catalyzing the conversion of thiosulfate to sulfite, which can then be used for L-cysteine biosynthesis. The chain is Thiosulfate sulfurtransferase GlpE from Vibrio atlanticus (strain LGP32) (Vibrio splendidus (strain Mel32)).